The primary structure comprises 260 residues: Aspartate/glutamate leucyltransferase (260 aa).

Belongs to the R-transferase family. Bpt subfamily.

It is found in the cytoplasm. It carries out the reaction N-terminal L-glutamyl-[protein] + L-leucyl-tRNA(Leu) = N-terminal L-leucyl-L-glutamyl-[protein] + tRNA(Leu) + H(+). The catalysed reaction is N-terminal L-aspartyl-[protein] + L-leucyl-tRNA(Leu) = N-terminal L-leucyl-L-aspartyl-[protein] + tRNA(Leu) + H(+). Functionally, functions in the N-end rule pathway of protein degradation where it conjugates Leu from its aminoacyl-tRNA to the N-termini of proteins containing an N-terminal aspartate or glutamate. The chain is Aspartate/glutamate leucyltransferase from Sphingomonas elodea.